The sequence spans 287 residues: Thioredoxin-related transmembrane protein 2 (287 aa).

Residues 1–35 (MAVLAPLLAFLYAVPGLLRWVSQPYYLLSALLSVS) form the signal peptide. The Extracellular segment spans residues 36 to 112 (FLLVRKVPPV…ILFFRLDLRM (77 aa)). Residues 113-133 (GLLYITLCIVFLMTCKPPLYL) form a helical membrane-spanning segment. Topologically, residues 134 to 287 (GPEHIKYFSD…NEYNDSKKDQ (154 aa)) are cytoplasmic. The region spanning 135–269 (PEHIKYFSDK…LYQKAKKIRK (135 aa)) is the Thioredoxin domain. Positions 284–287 (KKDQ) match the Di-lysine motif motif.

In terms of assembly, monomer. Homodimer; disulfide-linked. Occurs in both reduced and oxidized monomeric form. Oxidative conditions increase homodimerization.

The protein localises to the endoplasmic reticulum membrane. Its subcellular location is the mitochondrion membrane. Its function is as follows. Endoplasmic reticulum and mitochondria-associated protein that probably functions as a regulator of cellular redox state and thereby regulates protein post-translational modification, protein folding and mitochondrial activity. The polypeptide is Thioredoxin-related transmembrane protein 2 (tmx2) (Xenopus tropicalis (Western clawed frog)).